The chain runs to 591 residues: Aspartate--tRNA(Asp/Asn) ligase (591 aa).

An L-aspartate-binding site is contributed by E175. The aspartate stretch occupies residues 199 to 202; sequence QQYK. Residues R221 and H450 each contribute to the L-aspartate site. 221–223 is a binding site for ATP; it reads RDE. E484 provides a ligand contact to ATP. R491 provides a ligand contact to L-aspartate. ATP is bound at residue 536-539; it reads GVDR.

Belongs to the class-II aminoacyl-tRNA synthetase family. Type 1 subfamily. In terms of assembly, homodimer.

Its subcellular location is the cytoplasm. The catalysed reaction is tRNA(Asx) + L-aspartate + ATP = L-aspartyl-tRNA(Asx) + AMP + diphosphate. Functionally, aspartyl-tRNA synthetase with relaxed tRNA specificity since it is able to aspartylate not only its cognate tRNA(Asp) but also tRNA(Asn). Reaction proceeds in two steps: L-aspartate is first activated by ATP to form Asp-AMP and then transferred to the acceptor end of tRNA(Asp/Asn). The polypeptide is Aspartate--tRNA(Asp/Asn) ligase (Rhodopseudomonas palustris (strain TIE-1)).